We begin with the raw amino-acid sequence, 68 residues long: Large ribosomal subunit protein bL31 (68 aa).

It belongs to the bacterial ribosomal protein bL31 family. Type A subfamily. As to quaternary structure, part of the 50S ribosomal subunit.

Functionally, binds the 23S rRNA. The chain is Large ribosomal subunit protein bL31 from Helicobacter hepaticus (strain ATCC 51449 / 3B1).